Reading from the N-terminus, the 369-residue chain is Phenylalanine--tRNA ligase alpha subunit (369 aa).

Glu-269 contacts Mg(2+).

The protein belongs to the class-II aminoacyl-tRNA synthetase family. Phe-tRNA synthetase alpha subunit type 1 subfamily. As to quaternary structure, tetramer of two alpha and two beta subunits. Requires Mg(2+) as cofactor.

The protein resides in the cytoplasm. The catalysed reaction is tRNA(Phe) + L-phenylalanine + ATP = L-phenylalanyl-tRNA(Phe) + AMP + diphosphate + H(+). The protein is Phenylalanine--tRNA ligase alpha subunit of Brucella ovis (strain ATCC 25840 / 63/290 / NCTC 10512).